Consider the following 397-residue polypeptide: Ribosomal RNA large subunit methyltransferase I (397 aa).

In terms of domain architecture, PUA spans S2 to F79.

Belongs to the methyltransferase superfamily. RlmI family.

It localises to the cytoplasm. It carries out the reaction cytidine(1962) in 23S rRNA + S-adenosyl-L-methionine = 5-methylcytidine(1962) in 23S rRNA + S-adenosyl-L-homocysteine + H(+). Functionally, specifically methylates the cytosine at position 1962 (m5C1962) of 23S rRNA. This is Ribosomal RNA large subunit methyltransferase I from Aeromonas hydrophila subsp. hydrophila (strain ATCC 7966 / DSM 30187 / BCRC 13018 / CCUG 14551 / JCM 1027 / KCTC 2358 / NCIMB 9240 / NCTC 8049).